The chain runs to 61 residues: Small ribosomal subunit protein uS14 (61 aa).

C24, C27, C40, and C43 together coordinate Zn(2+).

Belongs to the universal ribosomal protein uS14 family. Zinc-binding uS14 subfamily. As to quaternary structure, part of the 30S ribosomal subunit. Contacts proteins S3 and S10. Zn(2+) serves as cofactor.

Its function is as follows. Binds 16S rRNA, required for the assembly of 30S particles and may also be responsible for determining the conformation of the 16S rRNA at the A site. In Borrelia garinii subsp. bavariensis (strain ATCC BAA-2496 / DSM 23469 / PBi) (Borreliella bavariensis), this protein is Small ribosomal subunit protein uS14.